Here is a 544-residue protein sequence, read N- to C-terminus: DNA mismatch repair protein MutL (544 aa).

This sequence belongs to the DNA mismatch repair MutL/HexB family.

Functionally, this protein is involved in the repair of mismatches in DNA. It is required for dam-dependent methyl-directed DNA mismatch repair. May act as a 'molecular matchmaker', a protein that promotes the formation of a stable complex between two or more DNA-binding proteins in an ATP-dependent manner without itself being part of a final effector complex. This is DNA mismatch repair protein MutL from Thermodesulfovibrio yellowstonii (strain ATCC 51303 / DSM 11347 / YP87).